Here is a 450-residue protein sequence, read N- to C-terminus: Cytochrome c1 (450 aa).

Positions M1–G21 are cleaved as a signal peptide. A compositionally biased stretch (low complexity) spans A24–E58. A disordered region spans residues A24–H210. Acidic residues-rich tracts occupy residues A59–E77, P85–A108, and A118–A194. Heme c is bound by residues C245, C248, and H249. Positions P284 to G305 are disordered. Heme c is bound at residue M373. The chain crosses the membrane as a helical span at residues S421 to T435.

As to quaternary structure, the main subunits of complex b-c1 are: cytochrome b, cytochrome c1 and the Rieske protein. Post-translationally, binds 1 heme c group covalently per subunit.

It localises to the cell membrane. Its function is as follows. Component of the ubiquinol-cytochrome c reductase complex (complex III or cytochrome b-c1 complex), which is a respiratory chain that generates an electrochemical potential coupled to ATP synthesis. c1 functions as an electron donor to cytochrome c. In Paracoccus denitrificans, this protein is Cytochrome c1 (petC).